A 941-amino-acid polypeptide reads, in one-letter code: ATP-dependent 6-phosphofructokinase subunit beta (941 aa).

The tract at residues 2-558 (PDASLFNGTS…HMKNFISTNS (557 aa)) is N-terminal catalytic PFK domain 1. Residues Gly-191, 255–256 (RC), and 285–288 (GDGS) each bind ATP. Asp-286 serves as a coordination point for Mg(2+). Residues 331–333 (SID), Arg-368, and 375–377 (MGR) each bind beta-D-fructose 6-phosphate. Asp-333 acts as the Proton acceptor in catalysis. Residues Ile-395, 400–405 (KPASSR), and Gln-410 contribute to the ATP site. Beta-D-fructose 6-phosphate is bound by residues Glu-432, Arg-460, and 466–469 (HVQR). 557–558 (NS) provides a ligand contact to ATP. Positions 559-572 (ADHVPPSLPLEKRK) are interdomain linker. The interval 573 to 941 (KIAIINVGAP…SDMLSGRTSL (369 aa)) is C-terminal regulatory PFK domain 2. Beta-D-fructose 2,6-bisphosphate contacts are provided by residues Arg-643, 701 to 705 (TISNN), Arg-739, 746 to 748 (QGG), Glu-806, Lys-832, 838 to 841 (HVQQ), and Arg-918.

This sequence belongs to the phosphofructokinase type A (PFKA) family. ATP-dependent PFK group I subfamily. Eukaryotic two domain clade 'E' sub-subfamily. In terms of assembly, heterododecamer of 4 alpha, 4 beta and 4 gamma chains. The cofactor is Mg(2+).

The protein resides in the cytoplasm. The enzyme catalyses beta-D-fructose 6-phosphate + ATP = beta-D-fructose 1,6-bisphosphate + ADP + H(+). The protein operates within carbohydrate degradation; glycolysis; D-glyceraldehyde 3-phosphate and glycerone phosphate from D-glucose: step 3/4. Its activity is regulated as follows. Allosterically activated by ADP, AMP, or fructose 2,6-bisphosphate, and allosterically inhibited by ATP or citrate. Catalyzes the phosphorylation of D-fructose 6-phosphate to fructose 1,6-bisphosphate by ATP, the first committing step of glycolysis. The sequence is that of ATP-dependent 6-phosphofructokinase subunit beta (PFK2) from Komagataella pastoris (Yeast).